The chain runs to 435 residues: 3-ketoacyl-CoA thiolase (435 aa).

Cys98 serves as the catalytic Acyl-thioester intermediate. Catalysis depends on proton acceptor residues His391 and Cys421.

This sequence belongs to the thiolase-like superfamily. Thiolase family. As to quaternary structure, heterotetramer of two alpha chains (FadJ) and two beta chains (FadI).

Its subcellular location is the cytoplasm. It catalyses the reaction an acyl-CoA + acetyl-CoA = a 3-oxoacyl-CoA + CoA. Its pathway is lipid metabolism; fatty acid beta-oxidation. Catalyzes the final step of fatty acid oxidation in which acetyl-CoA is released and the CoA ester of a fatty acid two carbons shorter is formed. This is 3-ketoacyl-CoA thiolase from Vibrio cholerae serotype O1 (strain ATCC 39315 / El Tor Inaba N16961).